Here is a 655-residue protein sequence, read N- to C-terminus: p-hydroxybenzoic acid efflux pump subunit AaeB (655 aa).

The next 11 helical transmembrane spans lie at 13–33, 38–58, 69–89, 93–113, 121–141, 152–172, 370–390, 407–427, 431–451, 459–479, and 482–502; these read FAVKLATAIVLALFVGFHFQL, WAVLTAAIVAAGPAFAAGGEP, LRIIGTFIGCIAGLVIIIAMI, LLMILVCCIWAGFCTWISSLV, WGLAGYTALIIVITIQPEPLL, EIVIGIVCAIMADLLFSPRSI, LFWLWTGWTSGSGAMVMIAVV, FIYGTLAALPLGLLYFLVIIP, QSMLLLCISLAVLGFFLGIEV, MGALASTINIIVLDNPMTFHF, and FLDSALGQIVGCVLAFTVILL.

Belongs to the aromatic acid exporter ArAE (TC 2.A.85) family.

Its subcellular location is the cell inner membrane. Its function is as follows. Forms an efflux pump with AaeA. Could function as a metabolic relief valve, allowing to eliminate certain compounds when they accumulate to high levels in the cell. The chain is p-hydroxybenzoic acid efflux pump subunit AaeB from Escherichia coli O81 (strain ED1a).